We begin with the raw amino-acid sequence, 120 residues long: Glycine cleavage system H protein (120 aa).

Residues 17-99 enclose the Lipoyl-binding domain; it reads VATVGITAHA…MGAGWFFKLK (83 aa). The residue at position 58 (lysine 58) is an N6-lipoyllysine.

The protein belongs to the GcvH family. The glycine cleavage system is composed of four proteins: P, T, L and H. Requires (R)-lipoate as cofactor.

The glycine cleavage system catalyzes the degradation of glycine. The H protein shuttles the methylamine group of glycine from the P protein to the T protein. This Rhizobium rhizogenes (strain K84 / ATCC BAA-868) (Agrobacterium radiobacter) protein is Glycine cleavage system H protein.